The chain runs to 166 residues: Small ribosomal subunit protein uS5 (166 aa).

Residues 11 to 74 (LQEKLIAVNR…EKARRNMINV (64 aa)) enclose the S5 DRBM domain.

It belongs to the universal ribosomal protein uS5 family. As to quaternary structure, part of the 30S ribosomal subunit. Contacts proteins S4 and S8.

In terms of biological role, with S4 and S12 plays an important role in translational accuracy. Functionally, located at the back of the 30S subunit body where it stabilizes the conformation of the head with respect to the body. The chain is Small ribosomal subunit protein uS5 from Mannheimia succiniciproducens (strain KCTC 0769BP / MBEL55E).